We begin with the raw amino-acid sequence, 128 residues long: MAFTGKYEFESEKNYDEFMKRLGLPDEVIERGRNFKIITEVQQDGENFTWSQSYSGGNIMSNKFTIGKECEMQTMGGKKFKATVKMEGGKVVADFPNYHQTSEVVGDKLVEISTIGDVTYERVSKRVA.

Ala2 carries the N-acetylalanine modification.

The protein belongs to the calycin superfamily. Fatty-acid binding protein (FABP) family. Predominantly expressed in ileum; also expressed in ovary.

It is found in the cytoplasm. The protein resides in the membrane. In terms of biological role, binds to bile acids and is involved in enterohepatic bile acid metabolism. Required for efficient apical to basolateral transport of conjugated bile acids in ileal enterocytes. Stimulates gastric acid and pepsinogen secretion. The chain is Gastrotropin (Fabp6) from Rattus norvegicus (Rat).